The primary structure comprises 467 residues: Asparagine--tRNA ligase (467 aa).

This sequence belongs to the class-II aminoacyl-tRNA synthetase family. Homodimer.

The protein localises to the cytoplasm. It carries out the reaction tRNA(Asn) + L-asparagine + ATP = L-asparaginyl-tRNA(Asn) + AMP + diphosphate + H(+). The polypeptide is Asparagine--tRNA ligase (Legionella pneumophila (strain Lens)).